We begin with the raw amino-acid sequence, 950 residues long: UvrABC system protein A (950 aa).

42–49 (GLSGSGKS) serves as a coordination point for ATP. The segment at 262 to 289 (CPVCSYSLPELEPRLFSFNNPMGSCPTC) adopts a C4-type zinc-finger fold. 2 consecutive ABC transporter domains span residues 319–596 (WDKR…EKSV) and 616–945 (VNPG…KYLK). 649-656 (GVSGSGKS) is an ATP binding site. A C4-type zinc finger spans residues 748-774 (CEACQGDGVIKVEMHFLPDVYVPCEVC).

Belongs to the ABC transporter superfamily. UvrA family. In terms of assembly, forms a heterotetramer with UvrB during the search for lesions.

The protein resides in the cytoplasm. In terms of biological role, the UvrABC repair system catalyzes the recognition and processing of DNA lesions. UvrA is an ATPase and a DNA-binding protein. A damage recognition complex composed of 2 UvrA and 2 UvrB subunits scans DNA for abnormalities. When the presence of a lesion has been verified by UvrB, the UvrA molecules dissociate. The sequence is that of UvrABC system protein A from Neisseria gonorrhoeae.